A 715-amino-acid chain; its full sequence is MLRFTHRGLPSSTRFRNIFVRLNHIYVPWFYAIDVPNSKPYLPTYQTLHSPKKFKPFSVDDSNRLEKASKRQERRPVLVNEDYLFKVDLSHMELSPTYWEGPTYQVRRGVWFDSSNQPLSSDLTSEIEGLYKQLKFDDSNDDPTTTPPAESQDIFRLKGKYPVDKENEGEQKNGSSNKDENESTFKFILFANKQTAFLLSDLDGGKLQLAFLRSNLAQSLPINATMITRSYKYSSSATTKQTSTSFKAAKTPQTEVADGSNSSKSRSIETKLEKKVSNLFNLSDFLQLFNGNASKDQDDAQSLEKQMETDYNNADNSQGANASSKIEDGKNSGASDRQIRSNRRDVDNLILCVHGIGQTLGKKYEYVNFAHTVNLLRSNMKKIYNNSEKLQSLNTAPDYKSNCNVQVLPITWRHSISFQTDAKEENIENPDLPTLSQVTVNGVLPLRKLLADGLLDILLYVEPYYQDMILQQVTSQLNKTYRIFKEFNPEFDGKVHLVGHSLGSMILFDILSKQKKYELEFQVDNLFFIGSPIGLLKLIQRTKIGDRPEFPNDLERKLTVQRPQCKDIYNVYHVCDPISYRMEPLVSKEMAHYEQTYLPHCSEAYGLTSKVLEFGENIWKDLPGTDENNLQSKKTSPEKKEVKLSENLTRMLTGLNYTGRLDYAMSPSLLEVDFISAIKSHVSYFEEPDIAAFILKEILSKHENASEIYVKRKTG.

The transit peptide at 1-22 (MLRFTHRGLPSSTRFRNIFVRL) directs the protein to the mitochondrion. Disordered regions lie at residues 161 to 180 (YPVDKENEGEQKNGSSNKDE), 242 to 268 (TSTSFKAAKTPQTEVADGSNSSKSRSI), and 311 to 340 (YNNADNSQGANASSKIEDGKNSGASDRQIR). The span at 242–251 (TSTSFKAAKT) shows a compositional bias: low complexity. Positions 311-324 (YNNADNSQGANASS) are enriched in polar residues. Ser-501 is an active-site residue. The DDHD domain occupies 519-700 (LEFQVDNLFF…AAFILKEILS (182 aa)).

The protein belongs to the PA-PLA1 family.

The protein resides in the mitochondrion. Functionally, probable phospholipase that hydrolyzes phosphatidic acid. This is Probable phospholipase YOR022C, mitochondrial from Saccharomyces cerevisiae (strain ATCC 204508 / S288c) (Baker's yeast).